The following is a 143-amino-acid chain: Anti-sigma F factor (143 aa).

Belongs to the anti-sigma-factor family.

The catalysed reaction is L-seryl-[protein] + ATP = O-phospho-L-seryl-[protein] + ADP + H(+). It catalyses the reaction L-threonyl-[protein] + ATP = O-phospho-L-threonyl-[protein] + ADP + H(+). Binds to sigma F and blocks its ability to form an RNA polymerase holoenzyme (E-sigma F). Phosphorylates SpoIIAA on a serine residue. This phosphorylation may enable SpoIIAA to act as an anti-anti-sigma factor that counteracts SpoIIAB and thus releases sigma F from inhibition. In Clostridium acetobutylicum (strain ATCC 824 / DSM 792 / JCM 1419 / IAM 19013 / LMG 5710 / NBRC 13948 / NRRL B-527 / VKM B-1787 / 2291 / W), this protein is Anti-sigma F factor.